Reading from the N-terminus, the 59-residue chain is Large ribosomal subunit protein bL32 (59 aa).

Over residues 1-16 the composition is skewed to basic residues; the sequence is MAVPKRKVSPHRRGNR. The interval 1–20 is disordered; sequence MAVPKRKVSPHRRGNRRAHD.

Belongs to the bacterial ribosomal protein bL32 family.

This is Large ribosomal subunit protein bL32 from Erythrobacter litoralis (strain HTCC2594).